A 294-amino-acid chain; its full sequence is Homeobox-leucine zipper protein ATHB-16 (294 aa).

The segment covering 1–20 has biased composition (polar residues); that stretch reads MKRLSSSDSMCGLISTSTDE. Residues 1–31 form a disordered region; it reads MKRLSSSDSMCGLISTSTDEQSPRGYGSNYQ. The homeobox DNA-binding region spans 56–115; that stretch reads LSEKKRRLKVDQVKALEKNFELENKLEPERKTKLAQELGLQPRQVAVWFQNRRARWKTKQ. The tract at residues 116–151 is leucine-zipper; sequence LEKDYGVLKGQYDSLRHNFDSLRRDNDSLLQEISKI. Over residues 219–238 the composition is skewed to polar residues; that stretch reads SSDSCDSSAVLNDETSSDNG. The tract at residues 219 to 241 is disordered; it reads SSDSCDSSAVLNDETSSDNGRLT.

Belongs to the HD-ZIP homeobox family. Class I subfamily. As to expression, widely expressed with a lower level in siliques.

It is found in the nucleus. Functionally, probable transcription factor that may function as a negative regulator of the flowering time response to photoperiod. May act to repress cell expansion during plant development. The protein is Homeobox-leucine zipper protein ATHB-16 (ATHB-16) of Arabidopsis thaliana (Mouse-ear cress).